The sequence spans 215 residues: Probable transaldolase (215 aa).

Residue lysine 83 is the Schiff-base intermediate with substrate of the active site.

Belongs to the transaldolase family. Type 3B subfamily.

Its subcellular location is the cytoplasm. It catalyses the reaction D-sedoheptulose 7-phosphate + D-glyceraldehyde 3-phosphate = D-erythrose 4-phosphate + beta-D-fructose 6-phosphate. It participates in carbohydrate degradation; pentose phosphate pathway; D-glyceraldehyde 3-phosphate and beta-D-fructose 6-phosphate from D-ribose 5-phosphate and D-xylulose 5-phosphate (non-oxidative stage): step 2/3. In terms of biological role, transaldolase is important for the balance of metabolites in the pentose-phosphate pathway. In Clostridium perfringens (strain ATCC 13124 / DSM 756 / JCM 1290 / NCIMB 6125 / NCTC 8237 / Type A), this protein is Probable transaldolase.